The sequence spans 637 residues: 1-deoxy-D-xylulose-5-phosphate synthase (637 aa).

Thiamine diphosphate contacts are provided by residues H75 and 116–118; that span reads AHS. Mg(2+) is bound at residue D147. Residues 148–149, N177, Y288, and E370 contribute to the thiamine diphosphate site; that span reads GA. N177 serves as a coordination point for Mg(2+).

The protein belongs to the transketolase family. DXPS subfamily. As to quaternary structure, homodimer. Mg(2+) serves as cofactor. Requires thiamine diphosphate as cofactor.

It catalyses the reaction D-glyceraldehyde 3-phosphate + pyruvate + H(+) = 1-deoxy-D-xylulose 5-phosphate + CO2. Its pathway is metabolic intermediate biosynthesis; 1-deoxy-D-xylulose 5-phosphate biosynthesis; 1-deoxy-D-xylulose 5-phosphate from D-glyceraldehyde 3-phosphate and pyruvate: step 1/1. Functionally, catalyzes the acyloin condensation reaction between C atoms 2 and 3 of pyruvate and glyceraldehyde 3-phosphate to yield 1-deoxy-D-xylulose-5-phosphate (DXP). The polypeptide is 1-deoxy-D-xylulose-5-phosphate synthase (Cupriavidus metallidurans (strain ATCC 43123 / DSM 2839 / NBRC 102507 / CH34) (Ralstonia metallidurans)).